The following is a 591-amino-acid chain: Pyruvate kinase 2 (591 aa).

A substrate-binding site is contributed by Arg38. Residues Asn40, Ser42, and Asp72 each coordinate K(+). Residue 40-43 (NFSH) participates in ATP binding. Residues Arg79 and Lys164 each coordinate ATP. Glu229 contributes to the Mg(2+) binding site. Substrate contacts are provided by Gly252, Asp253, and Thr285. Mg(2+) is bound at residue Asp253.

The protein belongs to the pyruvate kinase family. In the C-terminal section; belongs to the PEP-utilizing enzyme family. In terms of assembly, homotetramer. Requires Mg(2+) as cofactor. K(+) is required as a cofactor.

The catalysed reaction is pyruvate + ATP = phosphoenolpyruvate + ADP + H(+). Its pathway is carbohydrate degradation; glycolysis; pyruvate from D-glyceraldehyde 3-phosphate: step 5/5. The chain is Pyruvate kinase 2 (pyk2) from Synechocystis sp. (strain ATCC 27184 / PCC 6803 / Kazusa).